A 216-amino-acid polypeptide reads, in one-letter code: Glycerol-3-phosphate acyltransferase 3 (216 aa).

5 helical membrane-spanning segments follow: residues 6-26 (LLLVVIVSYLLGSIPFGYLVS), 58-78 (LVAALDVVKGVSAVAFAGLVI), 92-112 (ILFAQVLAGLAAVAGHIWPVF), 125-145 (FGGMIALCPVAAIFGGEVLII), and 158-178 (ITGVVGAYALLIPLTFISGFP).

This sequence belongs to the PlsY family. In terms of assembly, probably interacts with PlsX.

It localises to the cell membrane. The catalysed reaction is an acyl phosphate + sn-glycerol 3-phosphate = a 1-acyl-sn-glycero-3-phosphate + phosphate. It functions in the pathway lipid metabolism; phospholipid metabolism. In terms of biological role, catalyzes the transfer of an acyl group from acyl-phosphate (acyl-PO(4)) to glycerol-3-phosphate (G3P) to form lysophosphatidic acid (LPA). This enzyme utilizes acyl-phosphate as fatty acyl donor, but not acyl-CoA or acyl-ACP. The protein is Glycerol-3-phosphate acyltransferase 3 of Dehalococcoides mccartyi (strain ATCC BAA-2266 / KCTC 15142 / 195) (Dehalococcoides ethenogenes (strain 195)).